A 179-amino-acid polypeptide reads, in one-letter code: Calcineurin subunit B type 2 (179 aa).

A lipid anchor (N-myristoyl glycine) is attached at Gly2. 4 EF-hand domains span residues 18–53, 57–85, 87–122, and 128–163; these read EEIR…QQNP, RVID…FSVK, DEEQ…MVGN, and QLQQ…MEIH. Positions 31, 33, 35, 37, 42, 63, 65, 67, 69, 74, 100, 102, 104, and 111 each coordinate Ca(2+). The calcineurin A binding stretch occupies residues 131–136; that stretch reads QLVDKS. Ca(2+)-binding residues include Asp141, Asp143, Asp145, Arg147, and Glu152.

Belongs to the calcineurin regulatory subunit family. In terms of assembly, forms a complex composed of a calmodulin-dependent catalytic subunit (also known as calcineurin A) and a regulatory Ca(2+)-binding subunit (also known as calcineurin B). There are three catalytic subunits, each encoded by a separate gene (PPP3CA, PPP3CB, and PPP3CC) and two regulatory subunits which are also encoded by separate genes (PPP3R1 and PPP3R2). Interacts with SPATA33 (via PQIIIT motif). Expressed in osteoblasts and bone marrow (at protein level). Expressed in the testis. Expressed in the sperm midpiece in a SPATA33-dependent manner (at protein level).

It localises to the mitochondrion. Its function is as follows. Regulatory subunit of calcineurin, a calcium-dependent, calmodulin stimulated protein phosphatase. Confers calcium sensitivity. The protein is Calcineurin subunit B type 2 (Ppp3r2) of Mus musculus (Mouse).